The sequence spans 434 residues: Cobyrinate a,c-diamide synthase (434 aa).

Residues 239–430 (KMAIAYDPAF…SHLHFSNFQL (192 aa)) enclose the GATase cobBQ-type domain. Residue C320 is the Nucleophile of the active site.

Belongs to the CobB/CbiA family. Requires Mg(2+) as cofactor.

The catalysed reaction is cob(II)yrinate + 2 L-glutamine + 2 ATP + 2 H2O = cob(II)yrinate a,c diamide + 2 L-glutamate + 2 ADP + 2 phosphate + 2 H(+). Its pathway is cofactor biosynthesis; adenosylcobalamin biosynthesis; cob(II)yrinate a,c-diamide from sirohydrochlorin (anaerobic route): step 10/10. Catalyzes the ATP-dependent amidation of the two carboxylate groups at positions a and c of cobyrinate, using either L-glutamine or ammonia as the nitrogen source. This chain is Cobyrinate a,c-diamide synthase, found in Saccharolobus solfataricus (strain ATCC 35092 / DSM 1617 / JCM 11322 / P2) (Sulfolobus solfataricus).